The chain runs to 611 residues: Elongation factor 4 (611 aa).

The tr-type G domain maps to 12–193 (AVIRNFCIIA…TIVAKVPAPE (182 aa)). GTP contacts are provided by residues 24–29 (DHGKST) and 140–143 (NKID).

It belongs to the TRAFAC class translation factor GTPase superfamily. Classic translation factor GTPase family. LepA subfamily.

The protein localises to the cell membrane. It catalyses the reaction GTP + H2O = GDP + phosphate + H(+). Required for accurate and efficient protein synthesis under certain stress conditions. May act as a fidelity factor of the translation reaction, by catalyzing a one-codon backward translocation of tRNAs on improperly translocated ribosomes. Back-translocation proceeds from a post-translocation (POST) complex to a pre-translocation (PRE) complex, thus giving elongation factor G a second chance to translocate the tRNAs correctly. Binds to ribosomes in a GTP-dependent manner. The polypeptide is Elongation factor 4 (Cutibacterium acnes (strain DSM 16379 / KPA171202) (Propionibacterium acnes)).